A 1120-amino-acid polypeptide reads, in one-letter code: Vacuolar cation-chloride cotransporter 1 (1120 aa).

The disordered stretch occupies residues 1 to 21 (MVSRFYQIPGTHRPSSAISSS). Topologically, residues 1–62 (MVSRFYQIPG…YDPDNPNKDK (62 aa)) are cytoplasmic. At Ser-34 the chain carries Phosphoserine. A helical membrane pass occupies residues 63–83 (LGTYDGVFVPTALNVLSILMF). Over 84–85 (LR) the chain is Vacuolar. Residues 86–106 (FGFILGQLGIICTIGLLLLSY) form a helical membrane-spanning segment. The Cytoplasmic portion of the chain corresponds to 107 to 145 (TINLLTTLSISAISTNGTVRGGGAYYMISRSLGPEFGGS). The chain crosses the membrane as a helical span at residues 146 to 166 (IGLVFFLGQVFNAGMNAVGII). Residues 167–193 (EPLLYNLGYSAQGEPPAALGELLPRGH) are Vacuolar-facing. Residues 194-214 (WHEFTYATVILFLCFSVAFVG) form a helical membrane-spanning segment. The Cytoplasmic portion of the chain corresponds to 215–221 (SQTVSRA). Residues 222-242 (GNILFLVLAASIFSIPLSALI) traverse the membrane as a helical segment. Residues 243 to 283 (RSPFTEGGISYTGPSWQTFHDNLLPHLTKGAAGSLLKGKET) are Vacuolar-facing. The helical transmembrane segment at 284–304 (FNDLFGVFFPATAGIFAGAGM) threads the bilayer. Residues 305–317 (SSELRKPSKSIPK) are Cytoplasmic-facing. The chain crosses the membrane as a helical span at residues 318–338 (GTLWGLLFTFICYAVVVFSMG). Over 339–360 (CSIPRRSLYDEVQIIQTISSVQ) the chain is Vacuolar. The chain crosses the membrane as a helical span at residues 361 to 381 (WVIFMGEMATSLFSIIVGMLG). Residues 382-393 (AAYVLEAIAKDN) are Cytoplasmic-facing. The helical transmembrane segment at 394-414 (IIPGLEIFAHSPLYSLIFTWI) threads the bilayer. At 415–430 (LTQLCLFSDVNKIATF) the chain is on the vacuolar side. Residues 431 to 451 (ITMTFLMTFVVMNLACFLLGI) traverse the membrane as a helical segment. Topologically, residues 452-462 (SSAPNFRPSFK) are cytoplasmic. A helical membrane pass occupies residues 463–482 (YFNRYTTAIGALLSVVAMLI). Residues 483–487 (VDGIS) lie on the Vacuolar side of the membrane. A helical transmembrane segment spans residues 488–506 (ASVLFLAMILLFLFIHYFS). Topologically, residues 507–1120 (PPKSWGDVSQ…SQTMTVTTAL (614 aa)) are cytoplasmic. 3 positions are modified to phosphoserine: Ser-654, Ser-915, and Ser-918.

It belongs to the SLC12A transporter family.

The protein resides in the vacuole membrane. In terms of biological role, catalyzes the coordinated symport of chloride with potassium ions across the vacuolar membrane. Involved in vacuolar osmoregulation. The polypeptide is Vacuolar cation-chloride cotransporter 1 (Saccharomyces cerevisiae (strain ATCC 204508 / S288c) (Baker's yeast)).